We begin with the raw amino-acid sequence, 576 residues long: Proline--tRNA ligase (576 aa).

Belongs to the class-II aminoacyl-tRNA synthetase family. ProS type 1 subfamily. In terms of assembly, homodimer.

The protein localises to the cytoplasm. The catalysed reaction is tRNA(Pro) + L-proline + ATP = L-prolyl-tRNA(Pro) + AMP + diphosphate. Its function is as follows. Catalyzes the attachment of proline to tRNA(Pro) in a two-step reaction: proline is first activated by ATP to form Pro-AMP and then transferred to the acceptor end of tRNA(Pro). As ProRS can inadvertently accommodate and process non-cognate amino acids such as alanine and cysteine, to avoid such errors it has two additional distinct editing activities against alanine. One activity is designated as 'pretransfer' editing and involves the tRNA(Pro)-independent hydrolysis of activated Ala-AMP. The other activity is designated 'posttransfer' editing and involves deacylation of mischarged Ala-tRNA(Pro). The misacylated Cys-tRNA(Pro) is not edited by ProRS. In Leptospira borgpetersenii serovar Hardjo-bovis (strain JB197), this protein is Proline--tRNA ligase.